Consider the following 539-residue polypeptide: Phosphoenolpyruvate carboxykinase (ATP) (539 aa).

The substrate site is built by Arg61, Tyr195, and Lys201. ATP contacts are provided by residues Lys201, His220, and 238–246 (GLSGTGKTT). Residues Lys201 and His220 each coordinate Mn(2+). Asp259 is a binding site for Mn(2+). The ATP site is built by Glu287, Arg325, and Thr450. Substrate is bound at residue Arg325.

It belongs to the phosphoenolpyruvate carboxykinase (ATP) family. Requires Mn(2+) as cofactor.

It is found in the cytoplasm. It carries out the reaction oxaloacetate + ATP = phosphoenolpyruvate + ADP + CO2. Its pathway is carbohydrate biosynthesis; gluconeogenesis. Involved in the gluconeogenesis. Catalyzes the conversion of oxaloacetate (OAA) to phosphoenolpyruvate (PEP) through direct phosphoryl transfer between the nucleoside triphosphate and OAA. In Methylorubrum populi (strain ATCC BAA-705 / NCIMB 13946 / BJ001) (Methylobacterium populi), this protein is Phosphoenolpyruvate carboxykinase (ATP).